The following is a 302-amino-acid chain: MDQIRLTHLRQLEAESIHIIREVAAEFSNPVMLYSIGKDSSVMLHLARKAFYPGTLPFPLLHVDTGWKFREMYEFRDRTAKAYGCELLVHKNPEGVAMGINPFVHGSAKHTDIMKTEGLKQALNKYGFDAAFGGARRDEEKSRAKERIYSFRDRFHRWDPKNQRPELWHNYNGQINKGESIRVFPLSNWTEQDIWQYIWLENIDIVPLYLAAERPVLERDGMLMMIDDNRIDLQPGEVIKKRMVRFRTLGCWPLTGAVESNAQTLPEIIEEMLVSTTSERQGRVIDRDQAGSMELKKRQGYF.

Belongs to the PAPS reductase family. CysD subfamily. In terms of assembly, heterodimer composed of CysD, the smaller subunit, and CysN.

The catalysed reaction is sulfate + ATP + H(+) = adenosine 5'-phosphosulfate + diphosphate. The protein operates within sulfur metabolism; hydrogen sulfide biosynthesis; sulfite from sulfate: step 1/3. With CysN forms the ATP sulfurylase (ATPS) that catalyzes the adenylation of sulfate producing adenosine 5'-phosphosulfate (APS) and diphosphate, the first enzymatic step in sulfur assimilation pathway. APS synthesis involves the formation of a high-energy phosphoric-sulfuric acid anhydride bond driven by GTP hydrolysis by CysN coupled to ATP hydrolysis by CysD. In Escherichia coli O7:K1 (strain IAI39 / ExPEC), this protein is Sulfate adenylyltransferase subunit 2.